The chain runs to 344 residues: Ferrochelatase (344 aa).

Fe cation contacts are provided by histidine 214 and glutamate 295.

Belongs to the ferrochelatase family.

The protein localises to the cytoplasm. It catalyses the reaction heme b + 2 H(+) = protoporphyrin IX + Fe(2+). It participates in porphyrin-containing compound metabolism; protoheme biosynthesis; protoheme from protoporphyrin-IX: step 1/1. Catalyzes the ferrous insertion into protoporphyrin IX. This chain is Ferrochelatase, found in Allorhizobium ampelinum (strain ATCC BAA-846 / DSM 112012 / S4) (Agrobacterium vitis (strain S4)).